The chain runs to 1141 residues: DNA-directed RNA polymerase subunit beta (1141 aa).

Belongs to the RNA polymerase beta chain family. As to quaternary structure, the RNAP catalytic core consists of 2 alpha, 1 beta, 1 beta' and 1 omega subunit. When a sigma factor is associated with the core the holoenzyme is formed, which can initiate transcription.

The catalysed reaction is RNA(n) + a ribonucleoside 5'-triphosphate = RNA(n+1) + diphosphate. DNA-dependent RNA polymerase catalyzes the transcription of DNA into RNA using the four ribonucleoside triphosphates as substrates. The protein is DNA-directed RNA polymerase subunit beta of Frankia alni (strain DSM 45986 / CECT 9034 / ACN14a).